Reading from the N-terminus, the 390-residue chain is Galactokinase (390 aa).

34-37 (EHTD) is a substrate binding site. Residues S68 and 122-128 (GSGLSSS) each bind ATP. Positions 128 and 160 each coordinate Mg(2+). Catalysis depends on D172, which acts as the Proton acceptor. Y221 serves as a coordination point for substrate.

The protein belongs to the GHMP kinase family. GalK subfamily.

Its subcellular location is the cytoplasm. It catalyses the reaction alpha-D-galactose + ATP = alpha-D-galactose 1-phosphate + ADP + H(+). Its pathway is carbohydrate metabolism; galactose metabolism. Its function is as follows. Catalyzes the transfer of the gamma-phosphate of ATP to D-galactose to form alpha-D-galactose-1-phosphate (Gal-1-P). The polypeptide is Galactokinase (Chloroflexus aurantiacus (strain ATCC 29366 / DSM 635 / J-10-fl)).